The chain runs to 423 residues: Serine--tRNA ligase (423 aa).

Position 230 to 232 (230 to 232 (TAE)) interacts with L-serine. Position 261-263 (261-263 (RSE)) interacts with ATP. Residue Glu284 participates in L-serine binding. Position 348 to 351 (348 to 351 (EISS)) interacts with ATP. Ser383 lines the L-serine pocket.

The protein belongs to the class-II aminoacyl-tRNA synthetase family. Type-1 seryl-tRNA synthetase subfamily. Homodimer. The tRNA molecule binds across the dimer.

It localises to the cytoplasm. The catalysed reaction is tRNA(Ser) + L-serine + ATP = L-seryl-tRNA(Ser) + AMP + diphosphate + H(+). The enzyme catalyses tRNA(Sec) + L-serine + ATP = L-seryl-tRNA(Sec) + AMP + diphosphate + H(+). The protein operates within aminoacyl-tRNA biosynthesis; selenocysteinyl-tRNA(Sec) biosynthesis; L-seryl-tRNA(Sec) from L-serine and tRNA(Sec): step 1/1. Catalyzes the attachment of serine to tRNA(Ser). Is also able to aminoacylate tRNA(Sec) with serine, to form the misacylated tRNA L-seryl-tRNA(Sec), which will be further converted into selenocysteinyl-tRNA(Sec). In Levilactobacillus brevis (strain ATCC 367 / BCRC 12310 / CIP 105137 / JCM 1170 / LMG 11437 / NCIMB 947 / NCTC 947) (Lactobacillus brevis), this protein is Serine--tRNA ligase.